The primary structure comprises 408 residues: Peptidase T (408 aa).

Residue H78 participates in Zn(2+) binding. Residue D80 is part of the active site. D141 provides a ligand contact to Zn(2+). E175 functions as the Proton acceptor in the catalytic mechanism. Zn(2+) is bound by residues E176, D198, and H380.

The protein belongs to the peptidase M20B family. Zn(2+) serves as cofactor.

The protein resides in the cytoplasm. The catalysed reaction is Release of the N-terminal residue from a tripeptide.. Functionally, cleaves the N-terminal amino acid of tripeptides. The protein is Peptidase T of Clostridium botulinum (strain Okra / Type B1).